Reading from the N-terminus, the 421-residue chain is Battenin (421 aa).

5 helical membrane-spanning segments follow: residues 13-35 (SFHF…SGNL), 47-67 (IILW…TFLI), 74-96 (LKIV…SVYV), 101-123 (CIAA…LSYM), and 137-157 (GTGI…AAGL). Asparagine 159 carries an N-linked (GlcNAc...) asparagine glycan. The chain crosses the membrane as a helical span at residues 161–181 (TIFYMMLPTVAVYFLLFFFGL). The segment at 190-211 (DRTDNHNNSNNSSNNSKYTEKQ) is disordered. Over residues 195–205 (HNNSNNSSNNS) the composition is skewed to low complexity. N-linked (GlcNAc...) asparagine glycosylation is found at asparagine 196, asparagine 199, asparagine 200, and asparagine 203. The next 5 membrane-spanning stretches (helical) occupy residues 248–268 (LVWF…VASV), 284–304 (FFIA…VLIS), 313–333 (IKHI…WIIQ), 338–358 (MVTS…LGGA), and 382–402 (INYA…FILV).

It belongs to the battenin family.

The protein localises to the lysosome membrane. The polypeptide is Battenin (cln3) (Dictyostelium discoideum (Social amoeba)).